The sequence spans 246 residues: Ribonuclease PH (246 aa).

Phosphate is bound by residues R91 and 129 to 131 (GTR).

Belongs to the RNase PH family. In terms of assembly, homohexameric ring arranged as a trimer of dimers.

The enzyme catalyses tRNA(n+1) + phosphate = tRNA(n) + a ribonucleoside 5'-diphosphate. Phosphorolytic 3'-5' exoribonuclease that plays an important role in tRNA 3'-end maturation. Removes nucleotide residues following the 3'-CCA terminus of tRNAs; can also add nucleotides to the ends of RNA molecules by using nucleoside diphosphates as substrates, but this may not be physiologically important. Probably plays a role in initiation of 16S rRNA degradation (leading to ribosome degradation) during starvation. This chain is Ribonuclease PH, found in Burkholderia ambifaria (strain ATCC BAA-244 / DSM 16087 / CCUG 44356 / LMG 19182 / AMMD) (Burkholderia cepacia (strain AMMD)).